Consider the following 376-residue polypeptide: Cytoplasmic tRNA 2-thiolation protein 1 (376 aa).

Belongs to the TtcA family. CTU1/NCS6/ATPBD3 subfamily.

It localises to the cytoplasm. It participates in tRNA modification; 5-methoxycarbonylmethyl-2-thiouridine-tRNA biosynthesis. Functionally, plays a central role in 2-thiolation of mcm(5)S(2)U at tRNA wobble positions of tRNA(Lys), tRNA(Glu) and tRNA(Gln). Directly binds tRNAs and probably acts by catalyzing adenylation of tRNAs, an intermediate required for 2-thiolation. It is unclear whether it acts as a sulfurtransferase that transfers sulfur from thiocarboxylated URM1 onto the uridine of tRNAs at wobble position. Prior mcm(5) tRNA modification by the elongator complex is required for 2-thiolation. May also be involved in protein urmylation. This Scheffersomyces stipitis (strain ATCC 58785 / CBS 6054 / NBRC 10063 / NRRL Y-11545) (Yeast) protein is Cytoplasmic tRNA 2-thiolation protein 1.